The chain runs to 629 residues: Rho GTPase-activating protein conundrum (629 aa).

The required for interaction with Moe stretch occupies residues 185–294 (PPKSGTYADI…CRDSSSLDSC (110 aa)). Residues 237 to 261 (SIGRSKESRSENDARSQKKKSSEVL) form a disordered region. A compositionally biased stretch (basic and acidic residues) spans 240 to 258 (RSKESRSENDARSQKKKSS). In terms of domain architecture, Rho-GAP spans 359 to 565 (VSINALIRRD…ILILRGEKLF (207 aa)).

As to quaternary structure, interacts with Moe (via FERM domain).

Its subcellular location is the cytoplasm. The protein localises to the cell membrane. It localises to the cell cortex. It is found in the cell junction. Its function is as follows. GTPase-activating protein (GAP) for Rho1; functions with the ERM protein Moe to regulate Rho1 and control proliferation in the developing epithelium. Recruited by Moe to the cell cortex where it negatively regulates Rho1 activity. Can also promote cell proliferation independently of its GAP activity, perhaps by acting with Arf6 to positively regulate Rac1. This is Rho GTPase-activating protein conundrum from Drosophila melanogaster (Fruit fly).